A 170-amino-acid polypeptide reads, in one-letter code: Lipoprotein signal peptidase (170 aa).

3 helical membrane passes run 9–29 (FNIFVFIISLIFFDQLSKYLV), 72–92 (IFFLAMPIFILIFVFYLSLKE), and 94–114 (NCIARISLLLIFSGGVGNVID). Active-site residues include D124 and D146. The helical transmembrane segment at 143-163 (NFADSYVVIGMILFLVYDFFI) threads the bilayer.

It belongs to the peptidase A8 family.

It localises to the cell inner membrane. The catalysed reaction is Release of signal peptides from bacterial membrane prolipoproteins. Hydrolyzes -Xaa-Yaa-Zaa-|-(S,diacylglyceryl)Cys-, in which Xaa is hydrophobic (preferably Leu), and Yaa (Ala or Ser) and Zaa (Gly or Ala) have small, neutral side chains.. It participates in protein modification; lipoprotein biosynthesis (signal peptide cleavage). Functionally, this protein specifically catalyzes the removal of signal peptides from prolipoproteins. In Borreliella burgdorferi (strain ATCC 35210 / DSM 4680 / CIP 102532 / B31) (Borrelia burgdorferi), this protein is Lipoprotein signal peptidase.